A 222-amino-acid chain; its full sequence is Cytochrome b6 (222 aa).

Residues 39 to 59 form a helical membrane-spanning segment; that stretch reads IFYCLGGITLVCFIIQFATGF. Cysteine 42 lines the heme c pocket. The heme b site is built by histidine 93 and histidine 107. The next 3 membrane-spanning stretches (helical) occupy residues 97 to 117, 123 to 143, and 193 to 213; these read ASMM…TGGF, LTWI…VTGY, and LHTF…FLMI. The heme b site is built by histidine 194 and histidine 209.

Belongs to the cytochrome b family. PetB subfamily. As to quaternary structure, the 4 large subunits of the cytochrome b6-f complex are cytochrome b6, subunit IV (17 kDa polypeptide, PetD), cytochrome f and the Rieske protein, while the 4 small subunits are PetG, PetL, PetM and PetN. The complex functions as a dimer. Heme b is required as a cofactor. The cofactor is heme c.

It localises to the cellular thylakoid membrane. In terms of biological role, component of the cytochrome b6-f complex, which mediates electron transfer between photosystem II (PSII) and photosystem I (PSI), cyclic electron flow around PSI, and state transitions. The sequence is that of Cytochrome b6 from Prochlorothrix hollandica.